We begin with the raw amino-acid sequence, 130 residues long: Cytochrome c-type biogenesis protein CcmE (130 aa).

The Cytoplasmic segment spans residues 1 to 7 (MKKKHKR). The chain crosses the membrane as a helical; Signal-anchor for type II membrane protein span at residues 8 to 28 (LLITSGIFCFLSCAVFFILTT). At 29 to 130 (LKENISFFYT…DENYKPKVLK (102 aa)) the chain is on the extracellular side. Residues histidine 120 and tyrosine 124 each coordinate heme.

The protein belongs to the CcmE/CycJ family.

The protein resides in the cell membrane. In terms of biological role, heme chaperone required for the biogenesis of c-type cytochromes. Transiently binds heme delivered by CcmC and transfers the heme to apo-cytochromes in a process facilitated by CcmF and CcmH. The protein is Cytochrome c-type biogenesis protein CcmE of Wolbachia pipientis subsp. Culex pipiens (strain wPip).